The following is a 309-amino-acid chain: Heme-dependent oxidative N-demethylase beta subunit (309 aa).

Residues 2 to 103 form the FAD-binding FR-type domain; the sequence is STLLDVRVAA…SPPANLFPLH (102 aa). One can recognise a 2Fe-2S ferredoxin-type domain in the interval 226–309; it reads FRVELARSGQ…GCGSPILLDL (84 aa). C260, C265, C268, and C296 together coordinate [2Fe-2S] cluster.

This sequence belongs to the PDR/VanB family. The heme-dependent oxidative N-demethylase (HODM) is a heterotetramer composed of a catalytic alpha subunit, a FMN/2Fe-2S-dependent oxidoreductase beta subunit, a gamma subunit with putative aminotransferase activity, and a delta subunit of unknown function. [2Fe-2S] cluster serves as cofactor. FMN is required as a cofactor.

Component of the heme-dependent oxidative N-demethylase (HODM) enzyme, that catalyzes the NADPH-dependent oxidation of dimethylamine (DMA) to methylamine (MA) and formaldehyde. Functions in bacterial methylated amine catabolism, linking alkylamine oxidation to the tetrahydrofolate C1 pool. The beta subunit of HODM binds FMN and a 2Fe-2S cluster, and likely reduces the ferric heme iron of the alpha subunit to ferrous using NADPH. This is Heme-dependent oxidative N-demethylase beta subunit from Ectopseudomonas mendocina (strain ymp) (Pseudomonas mendocina).